An 849-amino-acid polypeptide reads, in one-letter code: Probable receptor-like protein kinase At1g30570 (849 aa).

Positions 1-28 (MSKLRKKYLEHLLCVLIFFTYVIGYGEA) are cleaved as a signal peptide. The Extracellular portion of the chain corresponds to 29–429 (QSKSFLVDCG…GHSVSDSKMR (401 aa)). Residues Asn40, Asn57, Asn94, Asn122, Asn158, Asn268, Asn271, Asn305, and Asn343 are each glycosylated (N-linked (GlcNAc...) asparagine). A helical transmembrane segment spans residues 430–450 (IIWISVGAGIAIIIFFVFLGI). The Cytoplasmic segment spans residues 451–849 (LVVCLCKKRR…QTGSALHNSA (399 aa)). Positions 520 to 793 (FDDGLAIGVG…GEVLWSLEYV (274 aa)) constitute a Protein kinase domain. ATP-binding positions include 526-534 (IGVGGFGKV) and Lys548. Catalysis depends on Asp644, which acts as the Proton acceptor. The interval 810–849 (FSSSQAVEEAPESFTLPACSNQDSSETEQSQTGSALHNSA) is disordered. Polar residues predominate over residues 827-849 (ACSNQDSSETEQSQTGSALHNSA).

Belongs to the protein kinase superfamily. Ser/Thr protein kinase family.

Its subcellular location is the cell membrane. In Arabidopsis thaliana (Mouse-ear cress), this protein is Probable receptor-like protein kinase At1g30570.